The chain runs to 102 residues: Large ribosomal subunit protein bL21 (102 aa).

Belongs to the bacterial ribosomal protein bL21 family. Part of the 50S ribosomal subunit. Contacts protein L20.

Functionally, this protein binds to 23S rRNA in the presence of protein L20. This Agathobacter rectalis (strain ATCC 33656 / DSM 3377 / JCM 17463 / KCTC 5835 / VPI 0990) (Eubacterium rectale) protein is Large ribosomal subunit protein bL21.